The sequence spans 348 residues: GTP 3',8-cyclase (348 aa).

A Radical SAM core domain is found at 24–242; it reads PFGRAVTYLR…EKQFTLTDID (219 aa). GTP is bound at residue R33. Residues C40 and C44 each coordinate [4Fe-4S] cluster. Residue Y46 coordinates S-adenosyl-L-methionine. C47 is a [4Fe-4S] cluster binding site. Residue R82 coordinates GTP. Residue G86 participates in S-adenosyl-L-methionine binding. T115 provides a ligand contact to GTP. Residue S139 participates in S-adenosyl-L-methionine binding. Residue K175 participates in GTP binding. S-adenosyl-L-methionine is bound at residue M209. The [4Fe-4S] cluster site is built by C272 and C275. 277-279 contributes to the GTP binding site; it reads RVR. C289 is a [4Fe-4S] cluster binding site.

The protein belongs to the radical SAM superfamily. MoaA family. In terms of assembly, monomer and homodimer. [4Fe-4S] cluster is required as a cofactor.

The enzyme catalyses GTP + AH2 + S-adenosyl-L-methionine = (8S)-3',8-cyclo-7,8-dihydroguanosine 5'-triphosphate + 5'-deoxyadenosine + L-methionine + A + H(+). The protein operates within cofactor biosynthesis; molybdopterin biosynthesis. Functionally, catalyzes the cyclization of GTP to (8S)-3',8-cyclo-7,8-dihydroguanosine 5'-triphosphate. This is GTP 3',8-cyclase from Rhizobium etli (strain CIAT 652).